Consider the following 724-residue polypeptide: Catalase-peroxidase (724 aa).

Residues 98–226 (WHSAGTYRIA…LAAVMMGLIY (129 aa)) constitute a cross-link (tryptophyl-tyrosyl-methioninium (Trp-Tyr) (with M-252)). Histidine 99 functions as the Proton acceptor in the catalytic mechanism. Positions 226–252 (YVNPEGVDGNPDPLKTAQDMRVTFARM) form a cross-link, tryptophyl-tyrosyl-methioninium (Tyr-Met) (with W-98). Position 267 (histidine 267) interacts with heme b.

Belongs to the peroxidase family. Peroxidase/catalase subfamily. Homodimer or homotetramer. Requires heme b as cofactor. In terms of processing, formation of the three residue Trp-Tyr-Met cross-link is important for the catalase, but not the peroxidase activity of the enzyme.

It carries out the reaction H2O2 + AH2 = A + 2 H2O. The catalysed reaction is 2 H2O2 = O2 + 2 H2O. Bifunctional enzyme with both catalase and broad-spectrum peroxidase activity. The sequence is that of Catalase-peroxidase from Vibrio cholerae serotype O1 (strain ATCC 39315 / El Tor Inaba N16961).